The primary structure comprises 62 residues: uncharacterized protein (62 aa).

The chain crosses the membrane as a helical span at residues Phe37–Tyr57.

It is found in the membrane. This is an uncharacterized protein from Dictyostelium discoideum (Social amoeba).